The primary structure comprises 246 residues: 1-(5-phosphoribosyl)-5-[(5-phosphoribosylamino)methylideneamino] imidazole-4-carboxamide isomerase (246 aa).

The active-site Proton acceptor is Asp8. Residue Asp130 is the Proton donor of the active site.

The protein belongs to the HisA/HisF family.

It localises to the cytoplasm. It carries out the reaction 1-(5-phospho-beta-D-ribosyl)-5-[(5-phospho-beta-D-ribosylamino)methylideneamino]imidazole-4-carboxamide = 5-[(5-phospho-1-deoxy-D-ribulos-1-ylimino)methylamino]-1-(5-phospho-beta-D-ribosyl)imidazole-4-carboxamide. It participates in amino-acid biosynthesis; L-histidine biosynthesis; L-histidine from 5-phospho-alpha-D-ribose 1-diphosphate: step 4/9. The polypeptide is 1-(5-phosphoribosyl)-5-[(5-phosphoribosylamino)methylideneamino] imidazole-4-carboxamide isomerase (Alcanivorax borkumensis (strain ATCC 700651 / DSM 11573 / NCIMB 13689 / SK2)).